The chain runs to 267 residues: Tryptophan synthase alpha chain (267 aa).

Residues glutamate 43 and aspartate 54 each act as proton acceptor in the active site.

Belongs to the TrpA family. In terms of assembly, tetramer of two alpha and two beta chains.

It catalyses the reaction (1S,2R)-1-C-(indol-3-yl)glycerol 3-phosphate + L-serine = D-glyceraldehyde 3-phosphate + L-tryptophan + H2O. It functions in the pathway amino-acid biosynthesis; L-tryptophan biosynthesis; L-tryptophan from chorismate: step 5/5. Functionally, the alpha subunit is responsible for the aldol cleavage of indoleglycerol phosphate to indole and glyceraldehyde 3-phosphate. The polypeptide is Tryptophan synthase alpha chain (Bacillus licheniformis (strain ATCC 14580 / DSM 13 / JCM 2505 / CCUG 7422 / NBRC 12200 / NCIMB 9375 / NCTC 10341 / NRRL NRS-1264 / Gibson 46)).